A 285-amino-acid chain; its full sequence is Proteasome subunit beta (285 aa).

A propeptide spans 1–50 (MTAEHPARLPQAFMTPGSSSFVDFLAAHDPSLLPSSRALPAGSAPPAPHG) (removed in mature form; by autocatalysis). T51 functions as the Nucleophile in the catalytic mechanism. A disordered region spans residues 266–285 (RTRQARSSRSRHGSLGGDLR).

The protein belongs to the peptidase T1B family. As to quaternary structure, the 20S proteasome core is composed of 14 alpha and 14 beta subunits that assemble into four stacked heptameric rings, resulting in a barrel-shaped structure. The two inner rings, each composed of seven catalytic beta subunits, are sandwiched by two outer rings, each composed of seven alpha subunits. The catalytic chamber with the active sites is on the inside of the barrel. Has a gated structure, the ends of the cylinder being occluded by the N-termini of the alpha-subunits. Is capped by the proteasome-associated ATPase, ARC.

It localises to the cytoplasm. It carries out the reaction Cleavage of peptide bonds with very broad specificity.. Its pathway is protein degradation; proteasomal Pup-dependent pathway. With respect to regulation, the formation of the proteasomal ATPase ARC-20S proteasome complex, likely via the docking of the C-termini of ARC into the intersubunit pockets in the alpha-rings, may trigger opening of the gate for substrate entry. Interconversion between the open-gate and close-gate conformations leads to a dynamic regulation of the 20S proteasome proteolysis activity. Component of the proteasome core, a large protease complex with broad specificity involved in protein degradation. This Sanguibacter keddieii (strain ATCC 51767 / DSM 10542 / NCFB 3025 / ST-74) protein is Proteasome subunit beta.